The chain runs to 317 residues: Inactive serine protease 45 (317 aa).

A signal peptide spans 1-35 (MATSLRGLDAGPGSLRRWILICFAALLLLPPRPNL). An N-linked (GlcNAc...) asparagine glycan is attached at Asn40. The 248-residue stretch at 44–291 (PVCGTPWWPD…YTIWIKDQVS (248 aa)) folds into the Peptidase S1 domain. Cys75 and Cys91 are disulfide-bonded. Asn110 carries N-linked (GlcNAc...) asparagine glycosylation. Intrachain disulfides connect Cys172–Cys249, Cys207–Cys230, and Cys239–Cys267. An N-linked (GlcNAc...) asparagine glycan is attached at Asn272.

This sequence belongs to the peptidase S1 family.

The protein resides in the secreted. The protein is Inactive serine protease 45 of Mus musculus (Mouse).